The following is a 275-amino-acid chain: N-(5'-phosphoribosyl)anthranilate isomerase 2, chloroplastic (275 aa).

The N-terminal 32 residues, 1 to 32 (MSTGISTDLHVHFGALNFSKTYKSGLSNRTVS), are a transit peptide targeting the chloroplast.

The protein belongs to the TrpF family. In terms of tissue distribution, expressed in roots and shoots.

The protein resides in the plastid. The protein localises to the chloroplast. It catalyses the reaction N-(5-phospho-beta-D-ribosyl)anthranilate = 1-(2-carboxyphenylamino)-1-deoxy-D-ribulose 5-phosphate. It functions in the pathway amino-acid biosynthesis; L-tryptophan biosynthesis; L-tryptophan from chorismate: step 3/5. This Arabidopsis thaliana (Mouse-ear cress) protein is N-(5'-phosphoribosyl)anthranilate isomerase 2, chloroplastic (PAI2).